The sequence spans 210 residues: Coatomer subunit zeta-2 (210 aa).

Residues 1–12 (MQRPEAWPRPHP) show a composition bias toward basic and acidic residues. The disordered stretch occupies residues 1-34 (MQRPEAWPRPHPGEGAAAAQAGGPAPPARAGEPS). Residues 13–34 (GEGAAAAQAGGPAPPARAGEPS) show a composition bias toward low complexity.

This sequence belongs to the adaptor complexes small subunit family. In terms of assembly, oligomeric complex.

It localises to the cytoplasm. It is found in the endoplasmic reticulum-Golgi intermediate compartment membrane. The protein localises to the golgi apparatus membrane. The protein resides in the cytoplasmic vesicle. Its subcellular location is the COPI-coated vesicle membrane. Functionally, the coatomer is a cytosolic protein complex that binds to dilysine motifs and reversibly associates with Golgi non-clathrin-coated vesicles, which further mediate biosynthetic protein transport from the ER, via the Golgi up to the trans Golgi network. Coatomer complex is required for budding from Golgi membranes, and is essential for the retrograde Golgi-to-ER transport of dilysine-tagged proteins. The zeta subunit may be involved in regulating the coat assembly and, hence, the rate of biosynthetic protein transport due to its association-dissociation properties with the coatomer complex. In Homo sapiens (Human), this protein is Coatomer subunit zeta-2 (COPZ2).